Here is a 356-residue protein sequence, read N- to C-terminus: Sensor protein BasS (356 aa).

Residues methionine 1–arginine 13 are Cytoplasmic-facing. The helical transmembrane segment at leucine 14–tryptophan 34 threads the bilayer. Residues histidine 35–glutamate 64 are Periplasmic-facing. Residues alanine 65–valine 88 form a helical membrane-spanning segment. An HAMP domain is found at arginine 89–aspartate 141. Residues arginine 89–alanine 356 lie on the Cytoplasmic side of the membrane. Residues aspartate 149 to alanine 356 enclose the Histidine kinase domain. At histidine 152 the chain carries Phosphohistidine; by autocatalysis.

Post-translationally, autophosphorylated.

It is found in the cell inner membrane. The enzyme catalyses ATP + protein L-histidine = ADP + protein N-phospho-L-histidine.. Member of the two-component regulatory system BasS/BasR. Autophosphorylates and activates BasR by phosphorylation. Plays a role in the adaptation of the organism to the host environment, in particular to neutrophils, and therefore it plays a role in virulence as well. The chain is Sensor protein BasS (basS) from Salmonella typhimurium (strain LT2 / SGSC1412 / ATCC 700720).